Reading from the N-terminus, the 490-residue chain is GTPase Der (490 aa).

2 consecutive EngA-type G domains span residues 3–166 and 203–376; these read PVVA…MDDV and IKLA…DSST. GTP-binding positions include 9 to 16, 56 to 60, 118 to 121, 209 to 216, 256 to 260, and 321 to 324; these read GRPNVGKS, DTGGI, NKTD, DTAGV, and NKWD. A KH-like domain is found at 377 to 461; sequence RRVSTAMLTR…PIRIQFKEGE (85 aa).

This sequence belongs to the TRAFAC class TrmE-Era-EngA-EngB-Septin-like GTPase superfamily. EngA (Der) GTPase family. Associates with the 50S ribosomal subunit.

In terms of biological role, GTPase that plays an essential role in the late steps of ribosome biogenesis. This is GTPase Der from Salmonella newport (strain SL254).